A 71-amino-acid polypeptide reads, in one-letter code: Sec-independent protein translocase protein TatA (71 aa).

Residues 1-21 (MGSFSIWHWLIVLVIVALIFG) form a helical membrane-spanning segment. A disordered region spans residues 48-71 (ADKTEQVTQQQTTIDVQAKEKQNS).

Belongs to the TatA/E family. In terms of assembly, the Tat system comprises two distinct complexes: a TatABC complex, containing multiple copies of TatA, TatB and TatC subunits, and a separate TatA complex, containing only TatA subunits. Substrates initially bind to the TatABC complex, which probably triggers association of the separate TatA complex to form the active translocon.

The protein resides in the cell inner membrane. In terms of biological role, part of the twin-arginine translocation (Tat) system that transports large folded proteins containing a characteristic twin-arginine motif in their signal peptide across membranes. TatA could form the protein-conducting channel of the Tat system. The chain is Sec-independent protein translocase protein TatA from Bordetella avium (strain 197N).